The primary structure comprises 592 residues: Pyruvate decarboxylase 3 (592 aa).

Residues aspartate 54 and histidine 141 each coordinate substrate. Residues 419–501 (DSWFNCQKLK…FLINNGGYTI (83 aa)) are thiamine pyrophosphate binding. The Mg(2+) site is built by aspartate 469, asparagine 496, and glycine 498. Glutamate 502 serves as a coordination point for substrate.

Belongs to the TPP enzyme family. As to quaternary structure, homotetramer. Requires a metal cation as cofactor. Thiamine diphosphate is required as a cofactor. Expressed at low levels in roots and shoots.

It catalyses the reaction a 2-oxocarboxylate + H(+) = an aldehyde + CO2. The protein is Pyruvate decarboxylase 3 (PDC3) of Arabidopsis thaliana (Mouse-ear cress).